Reading from the N-terminus, the 575-residue chain is Phosphoenolpyruvate-protein phosphotransferase (575 aa).

Residue H191 is the Tele-phosphohistidine intermediate of the active site. The phosphoenolpyruvate site is built by R298 and R334. The Mg(2+) site is built by E435 and D459. Phosphoenolpyruvate is bound by residues 458–459 (ND) and R469. The active-site Proton donor is C506.

This sequence belongs to the PEP-utilizing enzyme family. Homodimer. Requires Mg(2+) as cofactor.

It is found in the cytoplasm. It carries out the reaction L-histidyl-[protein] + phosphoenolpyruvate = N(pros)-phospho-L-histidyl-[protein] + pyruvate. Its function is as follows. General (non sugar-specific) component of the phosphoenolpyruvate-dependent sugar phosphotransferase system (sugar PTS). This major carbohydrate active-transport system catalyzes the phosphorylation of incoming sugar substrates concomitantly with their translocation across the cell membrane. Enzyme I transfers the phosphoryl group from phosphoenolpyruvate (PEP) to the phosphoryl carrier protein (HPr). This Lactococcus lactis subsp. lactis (strain IL1403) (Streptococcus lactis) protein is Phosphoenolpyruvate-protein phosphotransferase (ptsI).